Here is a 175-residue protein sequence, read N- to C-terminus: Translation initiation factor IF-3 (175 aa).

It belongs to the IF-3 family. In terms of assembly, monomer.

The protein localises to the cytoplasm. In terms of biological role, IF-3 binds to the 30S ribosomal subunit and shifts the equilibrium between 70S ribosomes and their 50S and 30S subunits in favor of the free subunits, thus enhancing the availability of 30S subunits on which protein synthesis initiation begins. The sequence is that of Translation initiation factor IF-3 from Aquifex aeolicus (strain VF5).